The following is a 547-amino-acid chain: Tripartite motif-containing protein 5 (547 aa).

The residue at position 2 (Ala-2) is an N-acetylalanine. Residues 15 to 59 (CPICLDLLTEPLSLDCGHSFCQACITADHKESTLHQGERSCPLCR) form an RING-type zinc finger. The residue at position 86 (Ser-86) is a Phosphoserine. Residues 91–132 (QKVDRCARHGEKLLLFCQQHGNVICWLCERSQEHRGHSTFLV) form a B box-type zinc finger. Zn(2+) is bound by residues Cys-96, His-99, Cys-118, and His-124. Residues 132-224 (VEEVAQKYRE…LAQSENDMVL (93 aa)) are a coiled coil. The interval 186 to 199 (FKQLRDILDCEESN) is required for interaction with GABARAP and for autophagy. In terms of domain architecture, B30.2/SPRY spans 280–547 (PNLKGMLQVF…LPMTLCSPSS (268 aa)).

It belongs to the TRIM/RBCC family. In terms of assembly, can form homodimers and homotrimers. In addition to lower-order dimerization, also exhibits a higher-order multimerization and both low- and high-order multimerizations are essential for its restriction activity. Interacts with BTBD1 and BTBD2. Interacts with PSMC4, PSMC5, PSMD7 and HSPA8/HSC70. Interacts (via B30.2/SPRY domain) with HSPA1A/B. Interacts with PSMC2, MAP3K7/TAK1, TAB2 and TAB3. Interacts with SQSTM1. Interacts with TRIM6 and TRIM34. Interacts with ULK1 (phosphorylated form), GABARAP, GABARAPL1, GABARAPL2, MAP1LC3A, MAP1LC3C and BECN1. In terms of processing, degraded in a proteasome-independent fashion in the absence of viral infection but in a proteasome-dependent fashion following exposure to restriction sensitive virus. Post-translationally, autoubiquitinated in a RING finger- and UBE2D2-dependent manner. Monoubiquitinated by TRIM21. Deubiquitinated by Yersinia YopJ. Ubiquitination may not lead to proteasomal degradation.

It localises to the cytoplasm. It is found in the nucleus. It catalyses the reaction S-ubiquitinyl-[E2 ubiquitin-conjugating enzyme]-L-cysteine + [acceptor protein]-L-lysine = [E2 ubiquitin-conjugating enzyme]-L-cysteine + N(6)-ubiquitinyl-[acceptor protein]-L-lysine.. Its pathway is protein modification; protein ubiquitination. Capsid-specific restriction factor that prevents infection from non-host-adapted retroviruses. Blocks viral replication early in the life cycle, after viral entry but before reverse transcription. In addition to acting as a capsid-specific restriction factor, also acts as a pattern recognition receptor that activates innate immune signaling in response to the retroviral capsid lattice. Binding to the viral capsid triggers its E3 ubiquitin ligase activity, and in concert with the heterodimeric ubiquitin conjugating enzyme complex UBE2V1-UBE2N (also known as UBC13-UEV1A complex) generates 'Lys-63'-linked polyubiquitin chains, which in turn are catalysts in the autophosphorylation of the MAP3K7/TAK1 complex (includes TAK1, TAB2, and TAB3). Activation of the MAP3K7/TAK1 complex by autophosphorylation results in the induction and expression of NF-kappa-B and MAPK-responsive inflammatory genes, thereby leading to an innate immune response in the infected cell. Plays a role in regulating autophagy through activation of autophagy regulator BECN1 by causing its dissociation from its inhibitors BCL2 and TAB2. The protein is Tripartite motif-containing protein 5 (TRIM5) of Lagothrix lagotricha (Brown woolly monkey).